Reading from the N-terminus, the 410-residue chain is Transcription factor PHYTOCHROME INTERACTING FACTOR-LIKE 13 (410 aa).

Low complexity predominate over residues 82–92 (AAAAAGPSSHH). Disordered stretches follow at residues 82–110 (AAAAAGPSSHHAPPPDLPPPAARPPMRSG) and 137–225 (CRDA…AEVH). Over residues 93 to 104 (APPPDLPPPAAR) the composition is skewed to pro residues. Residues 187–197 (GREDSDSRSED) show a composition bias toward basic and acidic residues. Over residues 209-219 (SSRRYGSKRRT) the composition is skewed to basic residues. The tract at residues 220 to 233 (RAAEVHNLSERRRR) is basic motif. In terms of domain architecture, bHLH spans 220 to 269 (RAAEVHNLSERRRRDRINEKMRALQELIPHCNKTDKASILDEAIEYLKSL). Residues 234 to 269 (DRINEKMRALQELIPHCNKTDKASILDEAIEYLKSL) form a helix-loop-helix motif region. The disordered stretch occupies residues 357–410 (PFLHPDGWQTVPPQVSGPYASGPQVAQQNQIPKASASTVLPNSGAEQPPTSDGI). Residues 380–410 (QVAQQNQIPKASASTVLPNSGAEQPPTSDGI) are compositionally biased toward polar residues.

Belongs to the bHLH protein family. Interacts with PRR1. Interacts with LF. In terms of tissue distribution, highly expressed in the node portions of the stem. Expressed in the leaves and the basal part of shoots.

It localises to the nucleus. Transcription factor that may act as negative regulator of phyB-dependent light signal transduction. Transcription activator that acts as a positive regulator of internode elongation. May function via regulation of cell wall-related genes. May play a role in a drought-associated growth-restriction mechanism in response to drought stress. The polypeptide is Transcription factor PHYTOCHROME INTERACTING FACTOR-LIKE 13 (Oryza sativa subsp. japonica (Rice)).